We begin with the raw amino-acid sequence, 306 residues long: tRNA dimethylallyltransferase (306 aa).

12 to 19 (GPTGVGKS) lines the ATP pocket. 14-19 (TGVGKS) contacts substrate.

The protein belongs to the IPP transferase family. In terms of assembly, monomer. Mg(2+) serves as cofactor.

It carries out the reaction adenosine(37) in tRNA + dimethylallyl diphosphate = N(6)-dimethylallyladenosine(37) in tRNA + diphosphate. Functionally, catalyzes the transfer of a dimethylallyl group onto the adenine at position 37 in tRNAs that read codons beginning with uridine, leading to the formation of N6-(dimethylallyl)adenosine (i(6)A). This chain is tRNA dimethylallyltransferase, found in Desulfatibacillum aliphaticivorans.